We begin with the raw amino-acid sequence, 214 residues long: External core antigen (214 aa).

A signal peptide spans 1 to 19 (MQLFHLCLIISCTCPTLQA). An HBEAG region spans residues 25–27 (GWL). The segment at 164-214 (PNAPILSTLPETTVVRRRDRGRSPRRRTPSPRRRRSQSPRRRRSQSRESQC) is disordered. Residues 178–207 (VRRRDRGRSPRRRTPSPRRRRSQSPRRRRS) are compositionally biased toward basic residues. A 1; half-length repeat occupies 186-192 (SPRRRTP). Positions 186-208 (SPRRRTPSPRRRRSQSPRRRRSQ) are 3 X 8 AA repeats of S-P-R-R-R-R-S-Q. The propeptide occupies 186 to 214 (SPRRRTPSPRRRRSQSPRRRRSQSRESQC). Tandem repeats lie at residues 193–200 (SPRRRRSQ) and 201–208 (SPRRRRSQ).

The protein belongs to the orthohepadnavirus precore antigen family. In terms of assembly, homodimerizes. Post-translationally, phosphorylated. In terms of processing, cleaved by host furin.

The protein localises to the secreted. The protein resides in the host nucleus. Functionally, may regulate immune response to the intracellular capsid in acting as a T-cell tolerogen, by having an immunoregulatory effect which prevents destruction of infected cells by cytotoxic T-cells. This immune regulation may predispose to chronicity during perinatal infections and prevent severe liver injury during adult infections. This is External core antigen from Homo sapiens (Human).